The primary structure comprises 215 residues: 2-phospho-L-lactate guanylyltransferase (215 aa).

Belongs to the CofC family. Homodimer.

The enzyme catalyses (2S)-2-phospholactate + GTP + H(+) = (2S)-lactyl-2-diphospho-5'-guanosine + diphosphate. It functions in the pathway cofactor biosynthesis; coenzyme F420 biosynthesis. Its function is as follows. Guanylyltransferase that catalyzes the activation of (2S)-2-phospholactate (2-PL) as (2S)-lactyl-2-diphospho-5'-guanosine, via the condensation of 2-PL with GTP. It is involved in the biosynthesis of coenzyme F420, a hydride carrier cofactor. In Methanoculleus marisnigri (strain ATCC 35101 / DSM 1498 / JR1), this protein is 2-phospho-L-lactate guanylyltransferase.